The sequence spans 218 residues: Protein GrpE (218 aa).

Residues 1-21 (MSDKQREAERQQSEDKAHSEA) show a composition bias toward basic and acidic residues. The disordered stretch occupies residues 1 to 66 (MSDKQREAER…LEEARARAEE (66 aa)). Residues 24 to 36 (AEAGQAPEAQAAE) are compositionally biased toward low complexity.

Belongs to the GrpE family. In terms of assembly, homodimer.

The protein resides in the cytoplasm. Participates actively in the response to hyperosmotic and heat shock by preventing the aggregation of stress-denatured proteins, in association with DnaK and GrpE. It is the nucleotide exchange factor for DnaK and may function as a thermosensor. Unfolded proteins bind initially to DnaJ; upon interaction with the DnaJ-bound protein, DnaK hydrolyzes its bound ATP, resulting in the formation of a stable complex. GrpE releases ADP from DnaK; ATP binding to DnaK triggers the release of the substrate protein, thus completing the reaction cycle. Several rounds of ATP-dependent interactions between DnaJ, DnaK and GrpE are required for fully efficient folding. This is Protein GrpE from Alkalilimnicola ehrlichii (strain ATCC BAA-1101 / DSM 17681 / MLHE-1).